An 878-amino-acid chain; its full sequence is Leucine--tRNA ligase (878 aa).

Positions 43 to 53 (PYPSGRIHIGH) match the 'HIGH' region motif. The short motif at 630–634 (KMSKS) is the 'KMSKS' region element. Lys-633 is a binding site for ATP.

It belongs to the class-I aminoacyl-tRNA synthetase family.

It localises to the cytoplasm. It carries out the reaction tRNA(Leu) + L-leucine + ATP = L-leucyl-tRNA(Leu) + AMP + diphosphate. In Nitrobacter hamburgensis (strain DSM 10229 / NCIMB 13809 / X14), this protein is Leucine--tRNA ligase.